A 160-amino-acid polypeptide reads, in one-letter code: Vesicle transport protein SFT2B (160 aa).

An N-acetylmethionine modification is found at Met-1. Residues Met-1–Gly-36 lie on the Cytoplasmic side of the membrane. Ser-9 bears the Phosphoserine mark. The helical transmembrane segment at Phe-37 to Val-57 threads the bilayer. At Pro-58–His-63 the chain is on the lumenal side. The chain crosses the membrane as a helical span at residues Leu-64–Met-84. The Cytoplasmic segment spans residues Gly-85–Arg-98. A helical transmembrane segment spans residues Leu-99 to Trp-119. Residues His-120–Gly-123 lie on the Lumenal side of the membrane. A helical membrane pass occupies residues Leu-124 to Ile-144. Residues Pro-145–Ala-160 are Cytoplasmic-facing.

This sequence belongs to the SFT2 family.

It localises to the membrane. Functionally, may be involved in fusion of retrograde transport vesicles derived from an endocytic compartment with the Golgi complex. In Homo sapiens (Human), this protein is Vesicle transport protein SFT2B.